Reading from the N-terminus, the 142-residue chain is Translation initiation factor 2 subunit beta (142 aa).

It belongs to the eIF-2-beta/eIF-5 family. Heterotrimer composed of an alpha, a beta and a gamma chain.

In terms of biological role, eIF-2 functions in the early steps of protein synthesis by forming a ternary complex with GTP and initiator tRNA. This is Translation initiation factor 2 subunit beta from Methanosphaera stadtmanae (strain ATCC 43021 / DSM 3091 / JCM 11832 / MCB-3).